Here is a 493-residue protein sequence, read N- to C-terminus: tRNA(Ile)-lysidine synthase (493 aa).

S26–S31 lines the ATP pocket.

This sequence belongs to the tRNA(Ile)-lysidine synthase family.

The protein localises to the cytoplasm. The catalysed reaction is cytidine(34) in tRNA(Ile2) + L-lysine + ATP = lysidine(34) in tRNA(Ile2) + AMP + diphosphate + H(+). Ligates lysine onto the cytidine present at position 34 of the AUA codon-specific tRNA(Ile) that contains the anticodon CAU, in an ATP-dependent manner. Cytidine is converted to lysidine, thus changing the amino acid specificity of the tRNA from methionine to isoleucine. This Bartonella henselae (strain ATCC 49882 / DSM 28221 / CCUG 30454 / Houston 1) (Rochalimaea henselae) protein is tRNA(Ile)-lysidine synthase.